A 178-amino-acid chain; its full sequence is Putative peroxiredoxin in rubredoxin operon (178 aa).

The region spanning 3 to 163 is the Thioredoxin domain; the sequence is RLVGKPAPEF…TLRVLKAFQT (161 aa). Catalysis depends on Cys50, which acts as the Cysteine sulfenic acid (-SOH) intermediate.

This sequence belongs to the peroxiredoxin family. AhpC/Prx1 subfamily. Homodimer; disulfide-linked, upon oxidation.

Its subcellular location is the cytoplasm. It carries out the reaction a hydroperoxide + [protein]-dithiol = [protein]-disulfide + an alcohol + H2O. Its function is as follows. Thiol-specific peroxidase that catalyzes the reduction of hydrogen peroxide and organic hydroperoxides to water and alcohols, respectively. Plays a role in cell protection against oxidative stress by detoxifying peroxides. This Clostridium pasteurianum protein is Putative peroxiredoxin in rubredoxin operon.